The chain runs to 234 residues: MSSGVAARCDAKKLVRSPSGLRMVPEHRAFGSPFGLEEPQWVPDKECPRCMQCDAKFDFITRKHHCRRCGKCFCDRCCSQKVPLRRMCFVDPVRQCADCALVSHREAEFYDKQLKVLVSGATFLVTFGDSEKPETMVCRLSNNQRCLILDGDSHHEIEIAHVCTVQILTEGFTPGAGSTRATGMFLQYTVPGAEAAAQLRLMAGEDASGSKRQAAAWLAAMHKATKLLYESRDQ.

The segment at 44 to 104 (DKECPRCMQC…QCADCALVSH (61 aa)) adopts an FYVE-type zinc-finger fold. Zn(2+) is bound by residues C50, C53, C66, C69, C74, C77, C96, and C99. Positions 107–234 (AEFYDKQLKV…TKLLYESRDQ (128 aa)) are PH-like.

Interacts with PTK2/FAK1.

The protein resides in the cell junction. It is found in the focal adhesion. It localises to the cytoplasmic vesicle. Its subcellular location is the endosome. Its function is as follows. Plays a role in cell adhesion, and thereby in cell motility which requires repeated formation and disassembly of focal adhesions. Regulates microtubule-induced PTK2/FAK1 dephosphorylation, an event important for focal adhesion disassembly, as well as integrin beta-1/ITGB1 cell surface expression. The chain is Zinc finger FYVE domain-containing protein 21 (Zfyve21) from Rattus norvegicus (Rat).